A 360-amino-acid polypeptide reads, in one-letter code: Photosystem II protein D1 (360 aa).

3 helical membrane-spanning segments follow: residues 29–46 (YIGW…TATS), 118–133 (HFLT…EWEL), and 142–156 (WISV…AAAA). His-118 lines the chlorophyll a pocket. Tyr-126 lines the pheophytin a pocket. 2 residues coordinate [CaMn4O5] cluster: Asp-170 and Glu-189. A helical transmembrane segment spans residues 197-218 (FHQLGVAGVFGGSLFSAMHGSL). Position 198 (His-198) interacts with chlorophyll a. A quinone contacts are provided by residues His-215 and 264–265 (SF). His-215 contributes to the Fe cation binding site. His-272 lines the Fe cation pocket. The helical transmembrane segment at 274–288 (FLGLWPVVGIWLTAL) threads the bilayer. The [CaMn4O5] cluster site is built by His-332, Glu-333, Asp-342, and Ala-344. Positions 345–360 (SGESLPVALTAPAVNG) are excised as a propeptide.

The protein belongs to the reaction center PufL/M/PsbA/D family. PSII is composed of 1 copy each of membrane proteins PsbA, PsbB, PsbC, PsbD, PsbE, PsbF, PsbH, PsbI, PsbJ, PsbK, PsbL, PsbM, PsbT, PsbX, PsbY, PsbZ, Psb30/Ycf12, at least 3 peripheral proteins of the oxygen-evolving complex and a large number of cofactors. It forms dimeric complexes. The cofactor is The D1/D2 heterodimer binds P680, chlorophylls that are the primary electron donor of PSII, and subsequent electron acceptors. It shares a non-heme iron and each subunit binds pheophytin, quinone, additional chlorophylls, carotenoids and lipids. D1 provides most of the ligands for the Mn4-Ca-O5 cluster of the oxygen-evolving complex (OEC). There is also a Cl(-1) ion associated with D1 and D2, which is required for oxygen evolution. The PSII complex binds additional chlorophylls, carotenoids and specific lipids.. In terms of processing, tyr-161 forms a radical intermediate that is referred to as redox-active TyrZ, YZ or Y-Z. C-terminally processed by CTPA; processing is essential to allow assembly of the oxygen-evolving complex and thus photosynthetic growth.

Its subcellular location is the plastid. The protein localises to the chloroplast thylakoid membrane. It carries out the reaction 2 a plastoquinone + 4 hnu + 2 H2O = 2 a plastoquinol + O2. In terms of biological role, photosystem II (PSII) is a light-driven water:plastoquinone oxidoreductase that uses light energy to abstract electrons from H(2)O, generating O(2) and a proton gradient subsequently used for ATP formation. It consists of a core antenna complex that captures photons, and an electron transfer chain that converts photonic excitation into a charge separation. The D1/D2 (PsbA/PsbD) reaction center heterodimer binds P680, the primary electron donor of PSII as well as several subsequent electron acceptors. The polypeptide is Photosystem II protein D1 (Pyropia yezoensis (Susabi-nori)).